The primary structure comprises 1069 residues: Protocadherin-8 (1069 aa).

The first 29 residues, M1–S29, serve as a signal peptide directing secretion. Cadherin domains follow at residues K30–F135, P136–F245, Q247–I354, Q393–F497, T498–L609, and A615–S721. The Extracellular portion of the chain corresponds to K30 to P747. An N-linked (GlcNAc...) asparagine glycan is attached at N616. Residues P719–S738 form a disordered region. Residues L748 to I768 form a helical membrane-spanning segment. Residues A769–V1069 lie on the Cytoplasmic side of the membrane. 3 disordered regions span residues K777–S859, R905–S927, and L1031–V1069. 2 stretches are compositionally biased toward basic and acidic residues: residues R780–P790 and R905–S920. The residue at position 1052 (S1052) is a Phosphoserine.

As to quaternary structure, the N-terminal extracellular domain forms homophilic interactions; these interactions activate p38 MAPK via TAOK2 and trigger endocytosis. Interacts with CDH2; this interaction may lead to CDH2 cointernalization. Interacts with CDH11. Interacts with TAOK2. Enriched in brain relative to peripheral tissues, with low expression in the testis. Expressed in hippocampal neurons (at protein level).

It is found in the cell membrane. Its subcellular location is the cell projection. It localises to the dendrite. The protein resides in the presynaptic cell membrane. The protein localises to the postsynaptic cell membrane. Functionally, calcium-dependent cell-adhesion protein. May play a role in activity-induced synaptic reorganization underlying long term memory. Could be involved in CDH2 internalization through TAOK2/p38 MAPK pathway. In hippocampal neurons, may play a role in the down-regulation of dendritic spines, maybe through its action on CDH2 endocytosis. In Rattus norvegicus (Rat), this protein is Protocadherin-8 (Pcdh8).